A 386-amino-acid chain; its full sequence is Galactokinase (386 aa).

A substrate-binding site is contributed by 35-38 (EHTD). Residues serine 69 and 125 to 131 (GAGLSSS) each bind ATP. Mg(2+) is bound by residues serine 131 and glutamate 163. Aspartate 175 (proton acceptor) is an active-site residue. Tyrosine 224 provides a ligand contact to substrate.

It belongs to the GHMP kinase family. GalK subfamily.

The protein resides in the cytoplasm. The enzyme catalyses alpha-D-galactose + ATP = alpha-D-galactose 1-phosphate + ADP + H(+). It functions in the pathway carbohydrate metabolism; galactose metabolism. In terms of biological role, catalyzes the transfer of the gamma-phosphate of ATP to D-galactose to form alpha-D-galactose-1-phosphate (Gal-1-P). The chain is Galactokinase from Vibrio vulnificus (strain YJ016).